The chain runs to 366 residues: GTPase Obg (366 aa).

Residues Met1–Leu162 enclose the Obg domain. The tract at residues Arg125–Gly150 is disordered. The OBG-type G domain maps to Ala163–Ala335. GTP-binding positions include Gly169 to Ser176, Phe194 to Val198, Asp218 to Gly221, Asn288 to Asp291, and Ser316 to Leu318. Positions 176 and 196 each coordinate Mg(2+).

It belongs to the TRAFAC class OBG-HflX-like GTPase superfamily. OBG GTPase family. In terms of assembly, monomer. Mg(2+) is required as a cofactor.

It localises to the cytoplasm. An essential GTPase which binds GTP, GDP and possibly (p)ppGpp with moderate affinity, with high nucleotide exchange rates and a fairly low GTP hydrolysis rate. Plays a role in control of the cell cycle, stress response, ribosome biogenesis and in those bacteria that undergo differentiation, in morphogenesis control. The sequence is that of GTPase Obg from Oleidesulfovibrio alaskensis (strain ATCC BAA-1058 / DSM 17464 / G20) (Desulfovibrio alaskensis).